The following is a 75-amino-acid chain: Rugosin-LK1 (75 aa).

The first 22 residues, 1–22 (MFTMKKSLLFLFFLGTISLSFC), serve as a signal peptide directing secretion. The propeptide occupies 23-40 (EEERSADEDDEGEMTEEE).

As to expression, expressed by the skin glands.

Its subcellular location is the secreted. Functionally, has antimicrobial activity against Gram-positive bacteria S.aureus ATCC 2592 (MIC=10.0 uM), S.aureus ATCC 43300 (MIC=15.0 uM) and B.subtilis (MIC=40.0 uM), against Gram-negative bacteria E.coli ML-35P (MIC=10.0 uM), P.aeruginosa PA01 (MIC=5.0 uM) and P.aeruginosa ATCC 27853 (MIC=5.0 uM) and against fungus C.albicans ATCC 2002 (MIC=10.0 uM). The polypeptide is Rugosin-LK1 (Limnonectes kuhlii (Kuhl's Creek frog)).